Consider the following 758-residue polypeptide: 5-methyltetrahydropteroyltriglutamate--homocysteine methyltransferase (758 aa).

5-methyltetrahydropteroyltri-L-glutamate contacts are provided by residues 17–20 and Lys117; that span reads RELK. Residues 434-436 and Glu487 each bind L-homocysteine; that span reads IGS. Residues 434 to 436 and Glu487 each bind L-methionine; that span reads IGS. 5-methyltetrahydropteroyltri-L-glutamate-binding positions include 518-519 and Trp564; that span reads RC. Residue Asp602 participates in L-homocysteine binding. An L-methionine-binding site is contributed by Asp602. 5-methyltetrahydropteroyltri-L-glutamate is bound at residue Glu608. 3 residues coordinate Zn(2+): His644, Cys646, and Glu668. His697 functions as the Proton donor in the catalytic mechanism. Zn(2+) is bound at residue Cys729.

It belongs to the vitamin-B12 independent methionine synthase family. Zn(2+) is required as a cofactor.

The enzyme catalyses 5-methyltetrahydropteroyltri-L-glutamate + L-homocysteine = tetrahydropteroyltri-L-glutamate + L-methionine. Its pathway is amino-acid biosynthesis; L-methionine biosynthesis via de novo pathway; L-methionine from L-homocysteine (MetE route): step 1/1. Its function is as follows. Catalyzes the transfer of a methyl group from 5-methyltetrahydrofolate to homocysteine resulting in methionine formation. In Yersinia pseudotuberculosis serotype O:1b (strain IP 31758), this protein is 5-methyltetrahydropteroyltriglutamate--homocysteine methyltransferase.